The primary structure comprises 341 residues: Glycerol-3-phosphate dehydrogenase [NAD(P)+] 1 (341 aa).

5 residues coordinate NADPH: serine 11, tryptophan 12, arginine 32, arginine 33, and lysine 106. The sn-glycerol 3-phosphate site is built by lysine 106, glycine 137, and serine 139. Alanine 141 serves as a coordination point for NADPH. Residues lysine 192, aspartate 245, serine 255, arginine 256, and asparagine 257 each coordinate sn-glycerol 3-phosphate. Lysine 192 (proton acceptor) is an active-site residue. Arginine 256 lines the NADPH pocket. Valine 280 and glutamate 282 together coordinate NADPH.

This sequence belongs to the NAD-dependent glycerol-3-phosphate dehydrogenase family.

It localises to the cytoplasm. It carries out the reaction sn-glycerol 3-phosphate + NAD(+) = dihydroxyacetone phosphate + NADH + H(+). The catalysed reaction is sn-glycerol 3-phosphate + NADP(+) = dihydroxyacetone phosphate + NADPH + H(+). Its pathway is membrane lipid metabolism; glycerophospholipid metabolism. Functionally, catalyzes the reduction of the glycolytic intermediate dihydroxyacetone phosphate (DHAP) to sn-glycerol 3-phosphate (G3P), the key precursor for phospholipid synthesis. This is Glycerol-3-phosphate dehydrogenase [NAD(P)+] 1 from Salinibacter ruber (strain DSM 13855 / M31).